Consider the following 337-residue polypeptide: Ketol-acid reductoisomerase (NADP(+)) (337 aa).

In terms of domain architecture, KARI N-terminal Rossmann spans methionine 1–threonine 181. Residues phenylalanine 24–glutamine 27, arginine 47, serine 50, serine 52, and aspartate 82–glutamine 85 contribute to the NADP(+) site. Histidine 107 is an active-site residue. Glycine 133 lines the NADP(+) pocket. The 147-residue stretch at threonine 182–leucine 328 folds into the KARI C-terminal knotted domain. Residues aspartate 190, glutamate 194, glutamate 226, and glutamate 230 each coordinate Mg(2+). Position 251 (serine 251) interacts with substrate.

It belongs to the ketol-acid reductoisomerase family. Mg(2+) serves as cofactor.

It catalyses the reaction (2R)-2,3-dihydroxy-3-methylbutanoate + NADP(+) = (2S)-2-acetolactate + NADPH + H(+). The enzyme catalyses (2R,3R)-2,3-dihydroxy-3-methylpentanoate + NADP(+) = (S)-2-ethyl-2-hydroxy-3-oxobutanoate + NADPH + H(+). It functions in the pathway amino-acid biosynthesis; L-isoleucine biosynthesis; L-isoleucine from 2-oxobutanoate: step 2/4. It participates in amino-acid biosynthesis; L-valine biosynthesis; L-valine from pyruvate: step 2/4. Functionally, involved in the biosynthesis of branched-chain amino acids (BCAA). Catalyzes an alkyl-migration followed by a ketol-acid reduction of (S)-2-acetolactate (S2AL) to yield (R)-2,3-dihydroxy-isovalerate. In the isomerase reaction, S2AL is rearranged via a Mg-dependent methyl migration to produce 3-hydroxy-3-methyl-2-ketobutyrate (HMKB). In the reductase reaction, this 2-ketoacid undergoes a metal-dependent reduction by NADPH to yield (R)-2,3-dihydroxy-isovalerate. This Thermus thermophilus (strain ATCC BAA-163 / DSM 7039 / HB27) protein is Ketol-acid reductoisomerase (NADP(+)).